The following is an 898-amino-acid chain: Protein translocase subunit SecA (898 aa).

ATP contacts are provided by residues Gln-87, 105 to 109, and Asp-512; that span reads GEGKT. The span at 855–865 shows a compositional bias: polar residues; sequence MQYQNNEGTSS. Positions 855 to 898 are disordered; the sequence is MQYQNNEGTSSLHEKSEHKIGRNESCPCGSGKKYKHCHGSKAKY. Over residues 866–876 the composition is skewed to basic and acidic residues; it reads LHEKSEHKIGR. Cys-880, Cys-882, Cys-891, and His-892 together coordinate Zn(2+). The segment covering 886–898 has biased composition (basic residues); it reads KKYKHCHGSKAKY.

This sequence belongs to the SecA family. Monomer and homodimer. Part of the essential Sec protein translocation apparatus which comprises SecA, SecYEG and auxiliary proteins SecDF-YajC and YidC. It depends on Zn(2+) as a cofactor.

The protein resides in the cell inner membrane. It localises to the cytoplasm. It catalyses the reaction ATP + H2O + cellular proteinSide 1 = ADP + phosphate + cellular proteinSide 2.. Its function is as follows. Part of the Sec protein translocase complex. Interacts with the SecYEG preprotein conducting channel. Has a central role in coupling the hydrolysis of ATP to the transfer of proteins into and across the cell membrane, serving both as a receptor for the preprotein-SecB complex and as an ATP-driven molecular motor driving the stepwise translocation of polypeptide chains across the membrane. The sequence is that of Protein translocase subunit SecA from Histophilus somni (strain 2336) (Haemophilus somnus).